Here is a 284-residue protein sequence, read N- to C-terminus: Tropomyosin (284 aa).

Positions 1–284 (MDAIKKKMQA…DQTFQELSGY (284 aa)) form a coiled coil. Residues 110–142 (TAKLEEATHTADESERVRKVMENRSFQDEERAN) show a composition bias toward basic and acidic residues. The disordered stretch occupies residues 110-143 (TAKLEEATHTADESERVRKVMENRSFQDEERANT).

It belongs to the tropomyosin family.

In terms of biological role, tropomyosin, in association with the troponin complex, plays a central role in the calcium dependent regulation of muscle contraction. This Anisakis simplex (Herring worm) protein is Tropomyosin.